A 472-amino-acid polypeptide reads, in one-letter code: Ras-GEF domain-containing family member 1B (472 aa).

The 131-residue stretch at 34–164 folds into the N-terminal Ras-GEF domain; sequence HDNNLLSGSL…MMQCLIRKLA (131 aa). Residues 204-452 form the Ras-GEF domain; it reads DPYTLAQQLT…YLASYESEGP (249 aa).

In terms of assembly, interacts with CCDC124 during cytokinesis. Interacts with Ras family proteins.

It localises to the early endosome. The protein localises to the late endosome. Its subcellular location is the midbody. Functionally, guanine nucleotide exchange factor (GEF) with specificity for RAP2A, it doesn't seems to activate other Ras family proteins (in vitro). The sequence is that of Ras-GEF domain-containing family member 1B (RASGEF1B) from Pongo abelii (Sumatran orangutan).